The primary structure comprises 387 residues: Phosphoglycerate kinase (387 aa).

Substrate-binding positions include aspartate 21 to asparagine 23, arginine 36, histidine 59 to arginine 62, arginine 114, and arginine 147. Residues lysine 198, glutamate 314, and glycine 340–threonine 343 each bind ATP.

This sequence belongs to the phosphoglycerate kinase family. In terms of assembly, monomer.

It is found in the cytoplasm. The catalysed reaction is (2R)-3-phosphoglycerate + ATP = (2R)-3-phospho-glyceroyl phosphate + ADP. It participates in carbohydrate degradation; glycolysis; pyruvate from D-glyceraldehyde 3-phosphate: step 2/5. The sequence is that of Phosphoglycerate kinase from Erwinia tasmaniensis (strain DSM 17950 / CFBP 7177 / CIP 109463 / NCPPB 4357 / Et1/99).